The sequence spans 190 residues: NADH dehydrogenase [ubiquinone] iron-sulfur protein 3 (190 aa).

It belongs to the complex I 30 kDa subunit family. In terms of assembly, complex I is composed of at least 49 different subunits. This is a component of the iron-sulfur (IP) fragment of the enzyme.

Its subcellular location is the mitochondrion inner membrane. The enzyme catalyses a ubiquinone + NADH + 5 H(+)(in) = a ubiquinol + NAD(+) + 4 H(+)(out). In terms of biological role, core subunit of the mitochondrial membrane respiratory chain NADH dehydrogenase (Complex I) that is believed to belong to the minimal assembly required for catalysis. Complex I functions in the transfer of electrons from NADH to the respiratory chain. The immediate electron acceptor for the enzyme is believed to be ubiquinone. This chain is NADH dehydrogenase [ubiquinone] iron-sulfur protein 3 (NAD9), found in Arabidopsis thaliana (Mouse-ear cress).